A 105-amino-acid chain; its full sequence is Phosphoribosyl-AMP cyclohydrolase (105 aa).

D72 lines the Mg(2+) pocket. Residue C73 coordinates Zn(2+). Residues D74 and D76 each contribute to the Mg(2+) site. Residues C89 and C96 each contribute to the Zn(2+) site.

Belongs to the PRA-CH family. In terms of assembly, homodimer. Requires Mg(2+) as cofactor. Zn(2+) serves as cofactor.

It is found in the cytoplasm. The catalysed reaction is 1-(5-phospho-beta-D-ribosyl)-5'-AMP + H2O = 1-(5-phospho-beta-D-ribosyl)-5-[(5-phospho-beta-D-ribosylamino)methylideneamino]imidazole-4-carboxamide. Its pathway is amino-acid biosynthesis; L-histidine biosynthesis; L-histidine from 5-phospho-alpha-D-ribose 1-diphosphate: step 3/9. Catalyzes the hydrolysis of the adenine ring of phosphoribosyl-AMP. In Listeria monocytogenes serotype 4a (strain HCC23), this protein is Phosphoribosyl-AMP cyclohydrolase.